The sequence spans 55 residues: Large ribosomal subunit protein bL32 (55 aa).

This sequence belongs to the bacterial ribosomal protein bL32 family.

The protein is Large ribosomal subunit protein bL32 of Aeromonas hydrophila subsp. hydrophila (strain ATCC 7966 / DSM 30187 / BCRC 13018 / CCUG 14551 / JCM 1027 / KCTC 2358 / NCIMB 9240 / NCTC 8049).